A 471-amino-acid chain; its full sequence is Citrate synthase, mitochondrial (471 aa).

Catalysis depends on residues histidine 309, histidine 355, and aspartate 409.

This sequence belongs to the citrate synthase family. Homodimer. As to expression, ubiquitous.

The protein resides in the mitochondrion matrix. The enzyme catalyses oxaloacetate + acetyl-CoA + H2O = citrate + CoA + H(+). The protein operates within carbohydrate metabolism; tricarboxylic acid cycle; isocitrate from oxaloacetate: step 1/2. The protein is Citrate synthase, mitochondrial of Solanum tuberosum (Potato).